Here is a 448-residue protein sequence, read N- to C-terminus: Adenylyltransferase and sulfurtransferase UBA4 (448 aa).

Residues Gly-88, Asp-109, 116–120 (SNLHR), Lys-133, and 177–178 (DT) each bind ATP. 2 residues coordinate Zn(2+): Cys-219 and Cys-222. The active-site Glycyl thioester intermediate; for adenylyltransferase activity is the Cys-236. Zn(2+) contacts are provided by Cys-297 and Cys-300. Positions 349–446 (QGENSILIDV…WSKEIDSKIP (98 aa)) constitute a Rhodanese domain. Residue Cys-405 is the Cysteine persulfide intermediate; for sulfurtransferase activity of the active site.

The protein in the N-terminal section; belongs to the HesA/MoeB/ThiF family. UBA4 subfamily. Zn(2+) serves as cofactor.

Its subcellular location is the cytoplasm. The protein resides in the cytosol. It functions in the pathway tRNA modification; 5-methoxycarbonylmethyl-2-thiouridine-tRNA biosynthesis. Plays a central role in 2-thiolation of mcm(5)S(2)U at tRNA wobble positions of cytosolic tRNA(Lys), tRNA(Glu) and tRNA(Gln). Acts by mediating the C-terminal thiocarboxylation of sulfur carrier URM1. Its N-terminus first activates URM1 as acyl-adenylate (-COAMP), then the persulfide sulfur on the catalytic cysteine is transferred to URM1 to form thiocarboxylation (-COSH) of its C-terminus. The reaction probably involves hydrogen sulfide that is generated from the persulfide intermediate and that acts as a nucleophile towards URM1. Subsequently, a transient disulfide bond is formed. Does not use thiosulfate as sulfur donor; NFS1 probably acting as a sulfur donor for thiocarboxylation reactions. Prior mcm(5) tRNA modification by the elongator complex is required for 2-thiolation. May also be involved in protein urmylation. This chain is Adenylyltransferase and sulfurtransferase UBA4, found in Debaryomyces hansenii (strain ATCC 36239 / CBS 767 / BCRC 21394 / JCM 1990 / NBRC 0083 / IGC 2968) (Yeast).